The chain runs to 189 residues: Transcription factor FapR (189 aa).

The protein belongs to the FapR family.

Functionally, transcriptional factor involved in regulation of membrane lipid biosynthesis by repressing genes involved in fatty acid and phospholipid metabolism. In Listeria monocytogenes serotype 4a (strain HCC23), this protein is Transcription factor FapR.